A 397-amino-acid polypeptide reads, in one-letter code: Acetate kinase (397 aa).

Asn9 is a Mg(2+) binding site. Residue Lys16 participates in ATP binding. Arg87 is a substrate binding site. Residue Asp144 is the Proton donor/acceptor of the active site. Residues 204 to 208, 279 to 281, and 327 to 331 each bind ATP; these read HLGNG, DCR, and GIGEN. Glu381 is a Mg(2+) binding site.

This sequence belongs to the acetokinase family. As to quaternary structure, homodimer. The cofactor is Mg(2+). Mn(2+) serves as cofactor.

The protein resides in the cytoplasm. It catalyses the reaction acetate + ATP = acetyl phosphate + ADP. It functions in the pathway metabolic intermediate biosynthesis; acetyl-CoA biosynthesis; acetyl-CoA from acetate: step 1/2. Catalyzes the formation of acetyl phosphate from acetate and ATP. Can also catalyze the reverse reaction. This Chromobacterium violaceum (strain ATCC 12472 / DSM 30191 / JCM 1249 / CCUG 213 / NBRC 12614 / NCIMB 9131 / NCTC 9757 / MK) protein is Acetate kinase.